Consider the following 318-residue polypeptide: Acetyl-coenzyme A carboxylase carboxyl transferase subunit alpha (318 aa).

One can recognise a CoA carboxyltransferase C-terminal domain in the interval 38–292 (KLEKRLAKLE…NKTITKSLHA (255 aa)).

It belongs to the AccA family. Acetyl-CoA carboxylase is a heterohexamer composed of biotin carboxyl carrier protein (AccB), biotin carboxylase (AccC) and two subunits each of ACCase subunit alpha (AccA) and ACCase subunit beta (AccD).

It is found in the cytoplasm. The enzyme catalyses N(6)-carboxybiotinyl-L-lysyl-[protein] + acetyl-CoA = N(6)-biotinyl-L-lysyl-[protein] + malonyl-CoA. It functions in the pathway lipid metabolism; malonyl-CoA biosynthesis; malonyl-CoA from acetyl-CoA: step 1/1. Its function is as follows. Component of the acetyl coenzyme A carboxylase (ACC) complex. First, biotin carboxylase catalyzes the carboxylation of biotin on its carrier protein (BCCP) and then the CO(2) group is transferred by the carboxyltransferase to acetyl-CoA to form malonyl-CoA. The polypeptide is Acetyl-coenzyme A carboxylase carboxyl transferase subunit alpha (Listeria monocytogenes serovar 1/2a (strain ATCC BAA-679 / EGD-e)).